Here is a 200-residue protein sequence, read N- to C-terminus: Cleavage and polyadenylation specificity factor subunit 5 (200 aa).

Residues 45-170 (LRKAVEGIII…LSLIAVSLYE (126 aa)) enclose the Nudix hydrolase domain. Positions 70–72 (NYF) are interaction with RNA. A Nudix box motif is present at residues 77 to 98 (GKLKPGENEIDGLIRKLTKKLS).

This sequence belongs to the Nudix hydrolase family. CPSF5 subfamily. In terms of assembly, homodimer (via N- and C-terminus); binds RNA as homodimer. Component of the cleavage factor Im (CFIm) complex.

The protein localises to the nucleus. It localises to the cytoplasm. In terms of biological role, component of the cleavage factor Im (CFIm) complex that functions as an activator of the pre-mRNA 3'-end cleavage and polyadenylation processing required for the maturation of pre-mRNA into functional mRNAs. CFIm contributes to the recruitment of multiprotein complexes on specific sequences on the pre-mRNA 3'-end, so called cleavage and polyadenylation signals (pA signals). Most pre-mRNAs contain multiple pA signals, resulting in alternative cleavage and polyadenylation (APA) producing mRNAs with variable 3'-end formation. The CFIm complex acts as a key regulator of cleavage and polyadenylation site choice during APA through its binding to 5'-UGUA-3' elements localized in the 3'-untranslated region (UTR) for a huge number of pre-mRNAs. Binds to 5'-UGUA-3' elements localized upstream of pA signals that act as enhancers of pre-mRNA 3'-end processing. The homodimer mediates simultaneous sequence-specific recognition of two 5'-UGUA-3' elements within the pre-mRNA. Plays a role in somatic cell fate transitions and pluripotency by regulating widespread changes in gene expression through an APA-dependent function. Binds to chromatin. This is Cleavage and polyadenylation specificity factor subunit 5 from Dictyostelium discoideum (Social amoeba).